A 404-amino-acid chain; its full sequence is MQDALAVILAGGMGSRLSPLTDDRAKPAVPFGGKYRIIDFTLTNCLNSGLRKILVLTQYKSHSLQKHLRDGWSIFNPELGEYITAVPPQMRKGGAWYEGTADAIYHNLWLLSRNDAKYVVVLSGDHIYRMDYAAMLEEHKEKGAKLTVACMDVPVKDASAFGVMGIAENGLVKSFVEKPENPPTLPDDNAKSLASMGIYIFDMDVLKEALTEDAKLETSSHDFGNDIIPKLIDTESVYAYKFCGSKGRVDKDCYWRDVGTIDSFYEANMDLLEPVPPMNLYQSNWAIRTYEPQFPPARTVSSATGNEGIFINSIIATGVINSGGSVQHSIISSNVRIQDSATVVDSIIFDDVEVGEGSQLVNCIVDKHVRIPPNTQIGINKVEDAKRFKISEKGIVVIPESYQF.

Residues Y97, G162, 177–178 (EK), and S195 contribute to the alpha-D-glucose 1-phosphate site.

This sequence belongs to the bacterial/plant glucose-1-phosphate adenylyltransferase family. As to quaternary structure, homotetramer.

It catalyses the reaction alpha-D-glucose 1-phosphate + ATP + H(+) = ADP-alpha-D-glucose + diphosphate. Its pathway is glycan biosynthesis; glycogen biosynthesis. In terms of biological role, involved in the biosynthesis of ADP-glucose, a building block required for the elongation reactions to produce glycogen. Catalyzes the reaction between ATP and alpha-D-glucose 1-phosphate (G1P) to produce pyrophosphate and ADP-Glc. The protein is Glucose-1-phosphate adenylyltransferase 2 of Vibrio parahaemolyticus serotype O3:K6 (strain RIMD 2210633).